Reading from the N-terminus, the 465-residue chain is uncharacterized protein (465 aa).

Disordered stretches follow at residues 95 to 173 (STST…RKDP), 407 to 426 (QEME…KSDK), and 443 to 465 (ANPI…SSKK). Residues 118 to 137 (KTGSKKVTRSKKSKKTKRRS) show a composition bias toward basic residues. Positions 138 to 150 (STTVTTTTISNSK) are enriched in low complexity. Over residues 153–173 (TPDKDKDSKDQRKQRTKRKDP) the composition is skewed to basic and acidic residues. The span at 451 to 465 (MARRNRRSKGSSSKK) shows a compositional bias: basic residues.

This is an uncharacterized protein from Caenorhabditis elegans.